A 635-amino-acid polypeptide reads, in one-letter code: MELKMHNVQETENLKFDAEVGKVLNIVIHSLYTNKDIFLRELISNASDACDKLRYESQLNPNLLDLSDELKITISSNKDKNELYITDNGIGMNRQDLIDNLGTIASSGTQKFLDAIKNSKDSSQTVELIGKFGVGFYSSFMVASEVIVESRKAGEEESWIWQSKGDGEYSISKSDNQVPRGTKITLIMHPEENEFLDKFRVENIVTTYSDHINFPVEFIDEEGKSEKLNSKAAIWTKPKNDVTQEEHNDFFRSVAHVGGEPWMILHNKNEGAIEYTNLLYVPSIKPFDLFHPDRRCSVKLYVNKVFITEDNVQIIPQYLRFLKGIVDSPDLPLNISRETLQNNRVVEQIRKSLTKRAISELGKKAKENLEEYTKFWTNFGAVLKEGLCEAMPTDEREALLSICRFHSTGDEKLVSIDDYISRMKPEQEHIYYLTGNSLDSVKNSPQLEGFVSKGLEVLLFVDPVDDFWTSVIHEYKDQKIKSVTRADVDLEKFSSEEDKTDEENKSNEEKTEETILQYFTTVLGDSVKSVKISKKLTDSPVCLAVDEGAMDLRMERFLREQKQLNYRTPKVLEINTKHPLIKSIMKSYAESGENPTLEDMIHLLFYQACIVEGEEMDDVSLFAKRLNNLLGKISV.

The tract at residues 1–337 is a; substrate-binding; it reads MELKMHNVQE…SPDLPLNISR (337 aa). A b region spans residues 338–556; sequence ETLQNNRVVE…EGAMDLRMER (219 aa). Residues 557 to 635 form a c region; that stretch reads FLREQKQLNY…LNNLLGKISV (79 aa).

It belongs to the heat shock protein 90 family. Homodimer.

It localises to the cytoplasm. Functionally, molecular chaperone. Has ATPase activity. The polypeptide is Chaperone protein HtpG (Wolbachia pipientis wMel).